The following is a 243-amino-acid chain: Transcription factor A, mitochondrial (243 aa).

The transit peptide at 1-42 directs the protein to the mitochondrion; that stretch reads MALFRGMWSVLKALGRTGVEMCAGCGGRIPSSISLVCIPKCF. Residues 49-117 constitute a DNA-binding region (HMG box 1); it reads PKKPMSSYLR…AYKEAVSKYK (69 aa). Residues Ser54, Ser55, and Ser60 each carry the phosphoserine; by PKA modification. The residue at position 66 (Lys66) is an N6-succinyllysine. Thr121 carries the post-translational modification Phosphothreonine. The segment at residues 154-218 is a DNA-binding region (HMG box 2); the sequence is PKRPRSAYNI…RYDNEMKSWE (65 aa). Ser159 carries the post-translational modification Phosphoserine; by PKA. Residue Ser192 is modified to Phosphoserine.

Monomer; binds DNA as a monomer. Homodimer. Component of the mitochondrial transcription initiation complex, composed at least of TFB2M, TFAM and POLRMT. In this complex TFAM recruits POLRMT to the promoter whereas TFB2M induces structural changes in POLRMT to enable promoter opening and trapping of the DNA non-template strand. Upon metabolic stress, forms a complex composed of FOXO3, SIRT3, TFAM and POLRMT. Interacts with TFB1M and TFB2M. Interacts with CLPX; this enhances DNA-binding. Post-translationally, phosphorylation by PKA within the HMG box 1 impairs DNA binding and promotes degradation by the AAA+ Lon protease. In terms of tissue distribution, the mitochondrial isoform is widely expressed while the nuclear isoform is testis-specific.

It localises to the mitochondrion. It is found in the mitochondrion matrix. Its subcellular location is the mitochondrion nucleoid. The protein localises to the nucleus. Binds to the mitochondrial light strand promoter and functions in mitochondrial transcription regulation. Component of the mitochondrial transcription initiation complex, composed at least of TFB2M, TFAM and POLRMT that is required for basal transcription of mitochondrial DNA. In this complex, TFAM recruits POLRMT to a specific promoter whereas TFB2M induces structural changes in POLRMT to enable promoter opening and trapping of the DNA non-template strand. Required for accurate and efficient promoter recognition by the mitochondrial RNA polymerase. Promotes transcription initiation from the HSP1 and the light strand promoter by binding immediately upstream of transcriptional start sites. Is able to unwind DNA. Bends the mitochondrial light strand promoter DNA into a U-turn shape via its HMG boxes. Required for maintenance of normal levels of mitochondrial DNA. May play a role in organizing and compacting mitochondrial DNA. Functionally, may also function as a transcriptional activator or may have a structural role in the compaction of nuclear DNA during spermatogenesis. This chain is Transcription factor A, mitochondrial, found in Mus musculus (Mouse).